The following is a 668-amino-acid chain: Bifunctional polymyxin resistance protein ArnA (668 aa).

Residues Met-1–Leu-307 are formyltransferase ArnAFT. His-106 (proton donor; for formyltransferase activity) is an active-site residue. Residues Arg-116 and Val-138–Asp-142 each bind (6R)-10-formyltetrahydrofolate. Positions Arg-317–Cys-668 are dehydrogenase ArnADH. NAD(+) contacts are provided by residues Asp-350 and Asp-371–Ile-372. Residues Ala-396, Tyr-401, and Thr-435–Ser-436 each bind UDP-alpha-D-glucuronate. Residue Glu-437 is the Proton acceptor; for decarboxylase activity of the active site. UDP-alpha-D-glucuronate contacts are provided by residues Arg-463, Asn-494, Arg-528 to Arg-537, and Tyr-615. The Proton donor; for decarboxylase activity role is filled by Arg-621.

It in the N-terminal section; belongs to the Fmt family. UDP-L-Ara4N formyltransferase subfamily. The protein in the C-terminal section; belongs to the NAD(P)-dependent epimerase/dehydratase family. UDP-glucuronic acid decarboxylase subfamily. As to quaternary structure, homohexamer, formed by a dimer of trimers.

It catalyses the reaction UDP-alpha-D-glucuronate + NAD(+) = UDP-beta-L-threo-pentopyranos-4-ulose + CO2 + NADH. It carries out the reaction UDP-4-amino-4-deoxy-beta-L-arabinose + (6R)-10-formyltetrahydrofolate = UDP-4-deoxy-4-formamido-beta-L-arabinose + (6S)-5,6,7,8-tetrahydrofolate + H(+). Its pathway is nucleotide-sugar biosynthesis; UDP-4-deoxy-4-formamido-beta-L-arabinose biosynthesis; UDP-4-deoxy-4-formamido-beta-L-arabinose from UDP-alpha-D-glucuronate: step 1/3. The protein operates within nucleotide-sugar biosynthesis; UDP-4-deoxy-4-formamido-beta-L-arabinose biosynthesis; UDP-4-deoxy-4-formamido-beta-L-arabinose from UDP-alpha-D-glucuronate: step 3/3. It functions in the pathway bacterial outer membrane biogenesis; lipopolysaccharide biosynthesis. Bifunctional enzyme that catalyzes the oxidative decarboxylation of UDP-glucuronic acid (UDP-GlcUA) to UDP-4-keto-arabinose (UDP-Ara4O) and the addition of a formyl group to UDP-4-amino-4-deoxy-L-arabinose (UDP-L-Ara4N) to form UDP-L-4-formamido-arabinose (UDP-L-Ara4FN). The modified arabinose is attached to lipid A and is required for resistance to polymyxin and cationic antimicrobial peptides. This Pseudomonas fluorescens (strain Pf0-1) protein is Bifunctional polymyxin resistance protein ArnA.